The sequence spans 156 residues: Small ribosomal subunit protein uS7 (156 aa).

The protein belongs to the universal ribosomal protein uS7 family. As to quaternary structure, part of the 30S ribosomal subunit. Contacts proteins S9 and S11.

Functionally, one of the primary rRNA binding proteins, it binds directly to 16S rRNA where it nucleates assembly of the head domain of the 30S subunit. Is located at the subunit interface close to the decoding center, probably blocks exit of the E-site tRNA. This Methylorubrum populi (strain ATCC BAA-705 / NCIMB 13946 / BJ001) (Methylobacterium populi) protein is Small ribosomal subunit protein uS7.